The chain runs to 678 residues: Chloride channel protein ClC-Kb (678 aa).

The Cytoplasmic portion of the chain corresponds to 1–50 (MEELVGLREGSSGNPVALRELWSPCPRLRRGIRGGLEWLKQKLFRVGEDW). Transmembrane regions (helical) follow at residues 51–82 (YFLM…KWLY) and 91–111 (LRYL…SGFS). An intramembrane region (helical) is located at residues 116–127 (PFSGGSGIPELK). Ser121 is a chloride binding site. 2 helical membrane-spanning segments follow: residues 141–160 (IKNF…TGST) and 161–180 (LFLG…AAYL). The helical intramembrane region spans 203–224 (AGAAVGVATVFAAPFSGVLFCI). A helical transmembrane segment spans residues 236–255 (YWRGFFAATCGAFMFRLLAV). Glu259, Glu261, Asp278, and Glu281 together coordinate Ca(2+). The next 2 helical transmembrane spans lie at 282-310 (IFFF…LAFT) and 325-342 (PLYA…TYPP). The segment at residues 349–360 (ASRLSMREHLDT) is an intramembrane region (helical). A glycan (N-linked (GlcNAc...) asparagine) is linked at Asn364. 2 helical membrane passes run 400 to 420 (GTLA…TTIP) and 421 to 440 (MPAG…GRLL). Position 426 (Phe426) interacts with chloride. Residues 464 to 496 (GGYALAGAAAFSGAVTHSISTALLAFELTGQIV) constitute an intramembrane region (helical). A helical membrane pass occupies residues 500 to 520 (PVLMAVLAANAIAQSCQPSFY). Topologically, residues 521 to 678 (DGTIMVKKLP…SWVERQHTGF (158 aa)) are cytoplasmic. CBS domains are found at residues 551–612 (MRRA…ARAS) and 620–678 (DILA…HTGF).

The protein belongs to the chloride channel (TC 2.A.49) family. CLCNKB subfamily. In terms of assembly, homodimer. Interacts with BSND. N-glycosylated. As to expression, expressed predominantly in the kidney.

It localises to the basolateral cell membrane. It catalyses the reaction chloride(in) = chloride(out). The enzyme catalyses iodide(out) = iodide(in). It carries out the reaction nitrate(in) = nitrate(out). The catalysed reaction is bromide(in) = bromide(out). Anion-selective channel permeable to small monovalent anions with ion selectivity for chloride &gt; bromide &gt; nitrate &gt; iodide. Forms a homodimeric channel where each subunit has its own ion conduction pathway. May conduct double-barreled currents controlled by two types of gates, two fast gates that control each subunit independently and a slow common gate that opens and shuts off both subunits simultaneously. Assembles with the regulatory subunit BSND/Barttin for sorting at the basolateral plasma membrane domain and functional switch to the ion conducting state. CLCNKB:BSND channels display mostly a linear current-voltage relationship controlled by common gate. Mediates chloride conductance along nephron segments, namely the thick ascending limb of Henle's loop, convoluted tubule and the collecting duct, contributing to the maintenance of systemic acid-base and electrolyte homeostasis. Conducts chloride currents in the stria vascularis of the inner ear to establish the endocochlear potential necessary for normal hearing. In Oryctolagus cuniculus (Rabbit), this protein is Chloride channel protein ClC-Kb (CLCNKB).